The primary structure comprises 258 residues: Acyl-[acyl-carrier-protein]--UDP-N-acetylglucosamine O-acyltransferase (258 aa).

The protein belongs to the transferase hexapeptide repeat family. LpxA subfamily. Homotrimer.

Its subcellular location is the cytoplasm. It catalyses the reaction a (3R)-hydroxyacyl-[ACP] + UDP-N-acetyl-alpha-D-glucosamine = a UDP-3-O-[(3R)-3-hydroxyacyl]-N-acetyl-alpha-D-glucosamine + holo-[ACP]. It functions in the pathway glycolipid biosynthesis; lipid IV(A) biosynthesis; lipid IV(A) from (3R)-3-hydroxytetradecanoyl-[acyl-carrier-protein] and UDP-N-acetyl-alpha-D-glucosamine: step 1/6. Its function is as follows. Involved in the biosynthesis of lipid A, a phosphorylated glycolipid that anchors the lipopolysaccharide to the outer membrane of the cell. The protein is Acyl-[acyl-carrier-protein]--UDP-N-acetylglucosamine O-acyltransferase of Neisseria gonorrhoeae (strain ATCC 700825 / FA 1090).